A 1006-amino-acid chain; its full sequence is Serine/threonine-protein phosphatase BSL3 (1006 aa).

Positions 1–67 (MDLDSSMVPE…QQQQQPQVTA (67 aa)) are disordered. 2 stretches are compositionally biased toward low complexity: residues 38–47 (SESESASLTP) and 54–67 (QQQQ…QVTA). Kelch repeat units follow at residues 138 to 184 (TSAG…VATA), 242 to 290 (YLMA…TASA), 295 to 345 (LLLL…VFVN), 351 to 398 (SGGA…DAAG), and 419 to 465 (LIFI…TPPG). 2 disordered regions span residues 454 to 494 (AAAA…LGSP) and 552 to 579 (GEVE…IKPD). Phosphoserine is present on serine 616. Mn(2+) contacts are provided by aspartate 709, histidine 711, aspartate 743, and asparagine 775. The active-site Proton donor is the histidine 776. The Mn(2+) site is built by histidine 828 and histidine 907. Serine 964 is modified (phosphoserine). Residues 982-1006 (NVNRPPTPTRGRPQNPNDRGSLAWI) are disordered.

The protein belongs to the PPP phosphatase family. BSU subfamily. The cofactor is Mn(2+). Expressed throughout the plant, with a higher level in younger parts.

It localises to the nucleus. The catalysed reaction is O-phospho-L-seryl-[protein] + H2O = L-seryl-[protein] + phosphate. It catalyses the reaction O-phospho-L-threonyl-[protein] + H2O = L-threonyl-[protein] + phosphate. In terms of biological role, phosphatase involved in elongation process, probably by acting as a regulator of brassinolide signaling. The polypeptide is Serine/threonine-protein phosphatase BSL3 (BSL3) (Arabidopsis thaliana (Mouse-ear cress)).